The following is a 276-amino-acid chain: Diaminopimelate epimerase (276 aa).

Substrate contacts are provided by Asn13, Gln46, and Asn66. The active-site Proton donor is the Cys75. Residues 76–77 (GN), Asn159, Asn192, and 210–211 (ER) contribute to the substrate site. Residue Cys219 is the Proton acceptor of the active site. Position 220 to 221 (220 to 221 (GT)) interacts with substrate.

This sequence belongs to the diaminopimelate epimerase family. In terms of assembly, homodimer.

It localises to the cytoplasm. It carries out the reaction (2S,6S)-2,6-diaminopimelate = meso-2,6-diaminopimelate. The protein operates within amino-acid biosynthesis; L-lysine biosynthesis via DAP pathway; DL-2,6-diaminopimelate from LL-2,6-diaminopimelate: step 1/1. Its function is as follows. Catalyzes the stereoinversion of LL-2,6-diaminopimelate (L,L-DAP) to meso-diaminopimelate (meso-DAP), a precursor of L-lysine and an essential component of the bacterial peptidoglycan. The protein is Diaminopimelate epimerase of Pseudomonas syringae pv. syringae (strain B728a).